Reading from the N-terminus, the 1006-residue chain is Multiple C2 domain and transmembrane region protein 9 (1006 aa).

The C2 1 domain maps to Met1–Tyr108. A disordered region spans residues Val135–Lys156. 3 consecutive C2 domains span residues Arg251–Tyr371, Ser411–Val536, and Asn579–Tyr704. Ca(2+) contacts are provided by Asp284, Asp290, Asp337, Asp339, and Asp344. The next 2 membrane-spanning stretches (helical) occupy residues Met842–Gly862 and Ala946–Phe966.

This sequence belongs to the MCTP family. Ca(2+) serves as cofactor. As to expression, expressed in incipient leaf primordia and roots meristems. Observed in flowers.

Its subcellular location is the cell membrane. It is found in the cytoplasm. Its function is as follows. May function as a signaling molecule by regulating the trafficking of other regulators. This is Multiple C2 domain and transmembrane region protein 9 from Arabidopsis thaliana (Mouse-ear cress).